The chain runs to 309 residues: Glutaminase (309 aa).

Substrate is bound by residues Ser-65, Asn-117, Glu-162, Asn-169, Tyr-193, Tyr-245, and Val-263.

The protein belongs to the glutaminase family. As to quaternary structure, homotetramer.

It carries out the reaction L-glutamine + H2O = L-glutamate + NH4(+). This Bacillus mycoides (strain KBAB4) (Bacillus weihenstephanensis) protein is Glutaminase.